A 456-amino-acid polypeptide reads, in one-letter code: Equilibrative nucleoside transporter 2 (456 aa).

Over 1-12 (MAHGNAPRDSYH) the chain is Cytoplasmic. Residues 13-29 (LVGISFFILGLGTLLPW) traverse the membrane as a helical segment. At 30-68 (NFFITAIPYFQGRLAGTNSSAETPSTNHTSPTDTFNFNN) the chain is on the extracellular side. 2 N-linked (GlcNAc...) asparagine glycosylation sites follow: asparagine 47 and asparagine 56. Residues 69 to 93 (WVTLLSQLPLLLFTLLNSFLYQCIP) traverse the membrane as a helical segment. The Cytoplasmic portion of the chain corresponds to 94-97 (ESVR). A helical transmembrane segment spans residues 98 to 116 (ILGSLLAILLLFALTAALV). Residues 117 to 124 (KVDLSPGL) lie on the Extracellular side of the membrane. The chain crosses the membrane as a helical span at residues 125-143 (FFSITMASVWFINSFCAVL). At 144 to 160 (QGSLFGQLGTMPSTYST) the chain is on the cytoplasmic side. Residues 161-185 (LFLSGQGLAGIFAALAMLTSLASGV) traverse the membrane as a helical segment. Residues 186-192 (DPQTSAL) lie on the Extracellular side of the membrane. A helical membrane pass occupies residues 193-213 (GYFITPCVGILLSIICYLSLP). Residues 214–291 (HLKFARYYLT…VFVVFRKIWL (78 aa)) are Cytoplasmic-facing. At serine 251 the chain carries Phosphoserine. Residues 292–311 (TALCLVLVFTVTLSVFPAIT) form a helical membrane-spanning segment. Residues 312-323 (AMVTTSSNSPGK) lie on the Extracellular side of the membrane. Residues 324 to 342 (WSQFFNPICCFLLFNVMDW) form a helical membrane-spanning segment. The Cytoplasmic portion of the chain corresponds to 343 to 359 (LGRSLTSYFLWPDEDSQ). A helical transmembrane segment spans residues 360–378 (LLPLLVCLRFLFVPLFMLC). Over 379-393 (HVPQRARLPIIFWQD) the chain is Extracellular. The helical transmembrane segment at 394-413 (AYFITFMLLFAISNGYFVSL) threads the bilayer. At 414 to 431 (TMCLAPRQVLPHEREVAG) the chain is on the cytoplasmic side. Residues 432-452 (ALMTFFLALGLSCGASLSFLF) traverse the membrane as a helical segment. The Extracellular segment spans residues 453–456 (KALL).

Belongs to the SLC29A/ENT transporter (TC 2.A.57) family. Expressed in squeletal muscles. Expressed in testis at the blood-brain-barrier.

The protein localises to the apical cell membrane. It is found in the basolateral cell membrane. The catalysed reaction is uridine(out) = uridine(in). The enzyme catalyses inosine(in) = inosine(out). It catalyses the reaction adenosine(in) = adenosine(out). It carries out the reaction thymidine(in) = thymidine(out). The catalysed reaction is hypoxanthine(out) = hypoxanthine(in). The enzyme catalyses adenine(out) = adenine(in). It catalyses the reaction cytidine(in) = cytidine(out). It carries out the reaction thymine(out) = thymine(in). The catalysed reaction is uracil(in) = uracil(out). The enzyme catalyses guanine(out) = guanine(in). It catalyses the reaction guanosine(in) = guanosine(out). Bidirectional uniporter involved in the facilitative transport of nucleosides and nucleobases, and contributes to maintaining their cellular homeostasis. Functions as a Na(+)-independent, passive transporter. Involved in the transport of nucleosides such as inosine, adenosine, uridine, thymidine, cytidine and guanosine. Also able to transport purine nucleobases (hypoxanthine, adenine, guanine) and pyrimidine nucleobases (thymine, uracil). Involved in nucleoside transport at basolateral membrane of kidney cells, allowing liver absorption of nucleoside metabolites. Mediates apical nucleoside uptake into Sertoli cells, thereby regulating the transport of nucleosides in testis across the blood-testis-barrier. Mediates both the influx and efflux of hypoxanthine in skeletal muscle microvascular endothelial cells to control the amount of intracellular hypoxanthine available for xanthine oxidase-mediated ROS production. The chain is Equilibrative nucleoside transporter 2 from Rattus norvegicus (Rat).